A 396-amino-acid chain; its full sequence is Tyrosine--tRNA ligase (396 aa).

The 'HIGH' region motif lies at 43-52; the sequence is PTAPDIHLGH. The short motif at 227–231 is the 'KMSKS' region element; it reads KMSKS. An ATP-binding site is contributed by K230. The 61-residue stretch at 335 to 395 folds into the S4 RNA-binding domain; it reads IGLATLLKEA…GKRKFARVTV (61 aa).

It belongs to the class-I aminoacyl-tRNA synthetase family. TyrS type 2 subfamily. Homodimer.

The protein resides in the cytoplasm. The enzyme catalyses tRNA(Tyr) + L-tyrosine + ATP = L-tyrosyl-tRNA(Tyr) + AMP + diphosphate + H(+). Its function is as follows. Catalyzes the attachment of tyrosine to tRNA(Tyr) in a two-step reaction: tyrosine is first activated by ATP to form Tyr-AMP and then transferred to the acceptor end of tRNA(Tyr). This Haemophilus ducreyi (strain 35000HP / ATCC 700724) protein is Tyrosine--tRNA ligase.